A 198-amino-acid polypeptide reads, in one-letter code: dTTP/UTP pyrophosphatase (198 aa).

Catalysis depends on D75, which acts as the Proton acceptor.

Belongs to the Maf family. YhdE subfamily. A divalent metal cation is required as a cofactor.

Its subcellular location is the cytoplasm. It catalyses the reaction dTTP + H2O = dTMP + diphosphate + H(+). The enzyme catalyses UTP + H2O = UMP + diphosphate + H(+). Its function is as follows. Nucleoside triphosphate pyrophosphatase that hydrolyzes dTTP and UTP. May have a dual role in cell division arrest and in preventing the incorporation of modified nucleotides into cellular nucleic acids. The chain is dTTP/UTP pyrophosphatase from Wolbachia sp. subsp. Brugia malayi (strain TRS).